Reading from the N-terminus, the 732-residue chain is Elongation factor 2 (732 aa).

One can recognise a tr-type G domain in the interval 19 to 260; sequence ERIRNIDIAA…MVIKNLPNPR (242 aa). GTP contacts are provided by residues 28–35, 94–98, and 148–151; these read AHIDHGKT, DTPGH, and NKVD. Histidine 598 carries the post-translational modification Diphthamide.

The protein belongs to the TRAFAC class translation factor GTPase superfamily. Classic translation factor GTPase family. EF-G/EF-2 subfamily.

It localises to the cytoplasm. Functionally, catalyzes the GTP-dependent ribosomal translocation step during translation elongation. During this step, the ribosome changes from the pre-translocational (PRE) to the post-translocational (POST) state as the newly formed A-site-bound peptidyl-tRNA and P-site-bound deacylated tRNA move to the P and E sites, respectively. Catalyzes the coordinated movement of the two tRNA molecules, the mRNA and conformational changes in the ribosome. This chain is Elongation factor 2, found in Picrophilus torridus (strain ATCC 700027 / DSM 9790 / JCM 10055 / NBRC 100828 / KAW 2/3).